The primary structure comprises 247 residues: Probable membrane transporter protein y4hK (247 aa).

The next 6 helical transmembrane spans lie at 5–25 (AIGLAIAFFVIALAYAAVGQA), 31–51 (IAAMALSGFSPLAIKPTALAL), 74–94 (VYPFAILGFPASALGGSVHLP), 121–141 (SALVITIPKTPPLHAALITGA), 202–222 (FLPWWLIAVAAGGSIGALIGS), and 227–247 (ASWLRVILSVLLMVSGLKLLW).

Belongs to the 4-toluene sulfonate uptake permease (TSUP) (TC 2.A.102) family.

It is found in the cell membrane. The chain is Probable membrane transporter protein y4hK from Sinorhizobium fredii (strain NBRC 101917 / NGR234).